A 224-amino-acid polypeptide reads, in one-letter code: Small ribosomal subunit protein uS3 (224 aa).

In terms of domain architecture, KH type-2 spans 38–106; it reads IRKFISKKLK…QVHINIVEIK (69 aa).

It belongs to the universal ribosomal protein uS3 family. As to quaternary structure, part of the 30S ribosomal subunit. Forms a tight complex with proteins S10 and S14.

In terms of biological role, binds the lower part of the 30S subunit head. Binds mRNA in the 70S ribosome, positioning it for translation. This chain is Small ribosomal subunit protein uS3, found in Lactobacillus helveticus (strain DPC 4571).